Consider the following 371-residue polypeptide: Poly(rC)-binding protein 3 (371 aa).

KH domains follow at residues 45–95 (TLTI…TITG), 129–182 (PVTL…TISG), and 293–357 (ASTH…QYLI).

As to expression, widely expressed, with highest levels in testis and fat tissues and lowest in heart.

The protein localises to the cytoplasm. Its function is as follows. Single-stranded nucleic acid binding protein that binds preferentially to oligo dC. The chain is Poly(rC)-binding protein 3 (Pcbp3) from Mus musculus (Mouse).